The chain runs to 513 residues: Mannosyl-oligosaccharide alpha-1,2-mannosidase 1B (513 aa).

An N-terminal signal peptide occupies residues 1–21 (MHLPSLSLSLTALAIASPSAA). 8 N-linked (GlcNAc...) asparagine glycosylation sites follow: Asn-97, Asn-117, Asn-150, Asn-184, Asn-251, Asn-322, Asn-348, and Asn-368. Cys-334 and Cys-363 form a disulfide bridge. Glu-377 acts as the Proton donor in catalysis. Thr-503 serves as a coordination point for Ca(2+).

Belongs to the glycosyl hydrolase 47 family. In terms of assembly, monomer. Ca(2+) serves as cofactor. Mg(2+) is required as a cofactor.

It is found in the cytoplasmic vesicle lumen. It catalyses the reaction N(4)-(alpha-D-Man-(1-&gt;2)-alpha-D-Man-(1-&gt;2)-alpha-D-Man-(1-&gt;3)-[alpha-D-Man-(1-&gt;2)-alpha-D-Man-(1-&gt;3)-[alpha-D-Man-(1-&gt;2)-alpha-D-Man-(1-&gt;6)]-alpha-D-Man-(1-&gt;6)]-beta-D-Man-(1-&gt;4)-beta-D-GlcNAc-(1-&gt;4)-beta-D-GlcNAc)-L-asparaginyl-[protein] (N-glucan mannose isomer 9A1,2,3B1,2,3) + 4 H2O = N(4)-(alpha-D-Man-(1-&gt;3)-[alpha-D-Man-(1-&gt;3)-[alpha-D-Man-(1-&gt;6)]-alpha-D-Man-(1-&gt;6)]-beta-D-Man-(1-&gt;4)-beta-D-GlcNAc-(1-&gt;4)-beta-D-GlcNAc)-L-asparaginyl-[protein] (N-glucan mannose isomer 5A1,2) + 4 beta-D-mannose. The catalysed reaction is N(4)-(alpha-D-Man-(1-&gt;2)-alpha-D-Man-(1-&gt;2)-alpha-D-Man-(1-&gt;3)-[alpha-D-Man-(1-&gt;3)-[alpha-D-Man-(1-&gt;2)-alpha-D-Man-(1-&gt;6)]-alpha-D-Man-(1-&gt;6)]-beta-D-Man-(1-&gt;4)-beta-D-GlcNAc-(1-&gt;4)-beta-D-GlcNAc)-L-asparaginyl-[protein] (N-glucan mannose isomer 8A1,2,3B1,3) + 3 H2O = N(4)-(alpha-D-Man-(1-&gt;3)-[alpha-D-Man-(1-&gt;3)-[alpha-D-Man-(1-&gt;6)]-alpha-D-Man-(1-&gt;6)]-beta-D-Man-(1-&gt;4)-beta-D-GlcNAc-(1-&gt;4)-beta-D-GlcNAc)-L-asparaginyl-[protein] (N-glucan mannose isomer 5A1,2) + 3 beta-D-mannose. The protein operates within protein modification; protein glycosylation. In terms of biological role, involved in the maturation of Asn-linked oligosaccharides. Progressively trims alpha-1,2-linked mannose residues from Man(9)GlcNAc(2) to produce Man(5)GlcNAc(2). This chain is Mannosyl-oligosaccharide alpha-1,2-mannosidase 1B (mns1B), found in Aspergillus phoenicis (Aspergillus saitoi).